A 918-amino-acid polypeptide reads, in one-letter code: MTGYTMLRNGGVGNGGQTCMLRWSNRIRLTWLSFTLFIILVFFPLIAHYYLTTLDEADEAGKRIFGPRAGSELCEVKHVLDLCRIRESVSEELLQLEAKRQELNSEIAKLNLKIEACKKSIENAKQDLLQLKNVISQTEHSYKELMAQNQPKLSLPIRLLPEKDDAGLPPPKVTRGCRLHNCFDYSRCPLTSGFPVYVYDSDQFAFGSYLDPLVKQAFQATVRANVYVTENAAIACLYVVLVGEMQEPTVLRPADLEKQLFSLPHWRTDGHNHVIINLSRKSDTQNLLYNVSTGRHVAQSTFYAAQYRAGFDLVVSPLVHAMSEPNFMEIPPQVPVKRKYLFTFQGEKIESLRSSLQEARSFEEEMEGDPPADYDDRIIATLKAVQDSKLDQVLVEFTCKNQPKPSLPTEWALCGEREDRLELLKLSTFALIITPGDPHLLISSGCATRLFEALEVGAVPVVLGEQVQLPYHDMLQWNEAALVVPKPRVTEVHFLLRSLSDSDLLAMRRQGRFLWETYFSTADSIFNTVLAMIRTRIQIPAAPIREEVAAEIPHRSGKAAGTDPNMADNGDLDLGPVETEPPYASPKYLRNFTLTVTDCYRGWNSAPGPFHLFPHTPFDPVLPSEAKFLGSGTGFRPIGGGAGGSGKEFQAALGGNVQREQFTVVMLTYEREEVLMNSLERLNGLPYLNKVVVVWNSPKLPSEDLLWPDIGVPIMVVRTEKNSLNNRFLPWNEIETEAILSIDDDAHLRHDEIMFGFRVWREARDRIVGFPGRYHAWDIPHQSWLYNSNYSCELSMVLTGAAFFHKYYAYLYSYVMPQAIRDMVDEYINCEDIAMNFLVSHITRKPPIKVTSRWTFRCPGCPQALSHDDSHFHERHKCINFFVKVYGYMPLLYTQFRVDSVLFKTRLPHDKTKCFKFI.

Over 1–30 (MTGYTMLRNGGVGNGGQTCMLRWSNRIRLT) the chain is Cytoplasmic. The required for interaction with REG3A stretch occupies residues 1 to 140 (MTGYTMLRNG…LKNVISQTEH (140 aa)). A helical; Signal-anchor for type II membrane protein transmembrane segment spans residues 31 to 51 (WLSFTLFIILVFFPLIAHYYL). The Lumenal segment spans residues 52–918 (TTLDEADEAG…HDKTKCFKFI (867 aa)). 2 cysteine pairs are disulfide-bonded: C177/C182 and C188/C236. N-linked (GlcNAc...) asparagine glycosylation occurs at N290. S361 is subject to Phosphoserine. The cysteines at positions 399 and 414 are disulfide-linked. N-linked (GlcNAc...) asparagine glycosylation is present at N591. Residues L667, R671, N696, N722, R727, D743, D744, and D745 each contribute to the UDP-N-acetyl-alpha-D-glucosamine site. D745 is a binding site for Mn(2+). A glycan (N-linked (GlcNAc...) asparagine) is linked at N789. C830 and C878 form a disulfide bridge. Residues E831, D832, and R875 each contribute to the UDP-N-acetyl-alpha-D-glucosamine site. The active site involves D832.

This sequence belongs to the glycosyltransferase 47 family. Homodimer; disulfide-linked. Interacts with REG3A. The cofactor is Mn(2+). As to expression, expressed in pancreatic islet beta-cells. Expressed in lung epithelial cells. Expressed in microglia.

Its subcellular location is the endoplasmic reticulum membrane. It is found in the golgi apparatus. The protein localises to the cell membrane. The protein resides in the nucleus. The enzyme catalyses 3-O-(beta-D-GlcA-(1-&gt;3)-beta-D-Gal-(1-&gt;3)-beta-D-Gal-(1-&gt;4)-beta-D-Xyl)-L-seryl-[protein] + UDP-N-acetyl-alpha-D-glucosamine = 3-O-(alpha-D-GlcNAc-(1-&gt;4)-beta-D-GlcA-(1-&gt;3)-beta-D-Gal-(1-&gt;3)-beta-D-Gal-(1-&gt;4)-beta-D-Xyl)-L-seryl-[protein] + UDP + H(+). The protein operates within glycan metabolism; heparan sulfate biosynthesis. Its function is as follows. Glycosyltransferase which regulates the biosynthesis of heparan sulfate (HS). Initiates HS synthesis by transferring the first N-acetyl-alpha-D-glucosamine (alpha-GlcNAc) residue (GlcNAcT-I activity) to the tetrasaccharide linker (GlcA-Gal-Gal-Xyl-)Ser core linker. May also transfer alpha-GlcNAc residues during HS elongation (GlcNAcT-II activity). Lacks glucuronyl transferase II (GlcAT-II) activity. Important for both skeletal development and hematopoiesis, through the formation of HS proteoglycans (HSPGs). Through the synthesis of HS, regulates postnatal pancreatic islet maturation and insulin secretion. Functionally, receptor for REG3A, REG3B and REG3G, induces the activation of downstream signaling pathways such as PI3K-AKT or RAS-RAF-MEK-ERK signaling pathway. Required for the function of REG3A in regulating keratinocyte proliferation and differentiation. Required for the inhibition of skin inflammation mediated by REG3A through the activation of PI3K-AKT-STAT3 pathway. Required for the function of REG3A and REG3G in glucose tolerance in pancreas. Expressed in microglia, is activated by nociceptor-derived REG3G in response to endotoxins, leading to the inhibition of kynurenine pathway to prevent endotoxic death. The protein is Exostosin-like 3 of Mus musculus (Mouse).